We begin with the raw amino-acid sequence, 217 residues long: DNA-binding transcriptional activator DevR/DosR (217 aa).

Positions 3-119 constitute a Response regulatory domain; it reads KVFLVDDHEV…ELARAVKDVG (117 aa). The residue at position 54 (aspartate 54) is a 4-aspartylphosphate. The HTH luxR-type domain maps to 143–208; it reads KQDPLSGLTD…QAAVFATELK (66 aa). A DNA-binding region (H-T-H motif) is located at residues 167–186; sequence NKQIADRMFLAEKTVKNYVS. Residues threonine 198 and threonine 205 each carry the phosphothreonine; by PknH modification.

Homodimer. Interacts with NarL. Post-translationally, phosphorylated on Asp-54 by both DevS (DosS) and DosT. Phosphorylated on Thr-198 and Thr-205 by PknH, which enhances DevR dimerization. Aspartate phosphorylation and threonine phosphorylation cooperatively enhance DevR binding to DNA.

The protein localises to the cytoplasm. It localises to the host cytoplasmic vesicle. Its subcellular location is the host phagosome. In terms of biological role, member of the two-component regulatory system DevR/DevS (also called DosR/DosS) involved in onset of the dormancy response. Regulates an approximately 48-member regulon. When phosphorylated binds and activates the promoter of DevR regulon genes in response to hypoxia. The presence of target DNA increases stability of phospho-DevR in vitro. Activates its own transcription under hypoxic but not aerobic conditions, probably binds as a dimer to tandem binding sites within the devR and hspX promoters. Accepts a phosphate group from DevS (DosS) and from DosT. Does not regulate transcription of dosT. The chain is DNA-binding transcriptional activator DevR/DosR from Mycobacterium tuberculosis (strain ATCC 25618 / H37Rv).